The chain runs to 127 residues: NADPH-dependent 7-cyano-7-deazaguanine reductase (127 aa).

The Thioimide intermediate role is filled by Cys-40. The active-site Proton donor is Asp-47. Residues 62-64 (VEL) and 81-82 (HE) contribute to the substrate site.

The protein belongs to the GTP cyclohydrolase I family. QueF type 1 subfamily.

The protein resides in the cytoplasm. The enzyme catalyses 7-aminomethyl-7-carbaguanine + 2 NADP(+) = 7-cyano-7-deazaguanine + 2 NADPH + 3 H(+). It functions in the pathway tRNA modification; tRNA-queuosine biosynthesis. In terms of biological role, catalyzes the NADPH-dependent reduction of 7-cyano-7-deazaguanine (preQ0) to 7-aminomethyl-7-deazaguanine (preQ1). The chain is NADPH-dependent 7-cyano-7-deazaguanine reductase from Campylobacter jejuni (strain RM1221).